The sequence spans 544 residues: Secreted aspartic protease 9 (544 aa).

Positions 1 to 17 (MRLNSVALLSLVATALA) are cleaved as a signal peptide. The tract at residues 31–50 (GESKDDLSPEDDSNPRFVKR) is disordered. Residues 65-479 (YMATLKIGSN…DLDDYEVSLA (415 aa)) enclose the Peptidase A1 domain. 83-85 (DTG) contacts pepstatin A. C98 and C195 form a disulfide bridge. T167 is an active-site residue. N-linked (GlcNAc...) asparagine glycans are attached at residues N212, N240, and N252. D371 is a catalytic residue. 371 to 375 (DTGST) is a binding site for pepstatin A. A disulfide bridge connects residues C406 and C441. 2 N-linked (GlcNAc...) asparagine glycosylation sites follow: N422 and N499. Residues 500–520 (SSGSGTTSSSGTSTSTSTRHS) form a disordered region.

The protein belongs to the peptidase A1 family. As to quaternary structure, monomer. Post-translationally, the GPI-anchor is attached to the protein in the endoplasmic reticulum and serves to target the protein to the cell surface. There, the glucosamine-inositol phospholipid moiety is cleaved off and the GPI-modified mannoprotein is covalently attached via its lipidless GPI glycan remnant to the 1,6-beta-glucan of the outer cell wall layer.

The protein resides in the cell membrane. The protein localises to the secreted. It localises to the cell wall. It carries out the reaction Preferential cleavage at the carboxyl of hydrophobic amino acids, but fails to cleave 15-Leu-|-Tyr-16, 16-Tyr-|-Leu-17 and 24-Phe-|-Phe-25 of insulin B chain. Activates trypsinogen, and degrades keratin.. In terms of biological role, secreted aspartic peptidases (SAPs) are a group of ten acidic hydrolases considered as key virulence factors. These enzymes supply the fungus with nutrient amino acids as well as are able to degrade the selected host's proteins involved in the immune defense. Moreover, acts toward human hemoglobin though limited proteolysis to generate a variety of antimicrobial hemocidins, enabling to compete with the other microorganisms of the same physiological niche using the microbicidal peptides generated from the host protein. Plays a key role in defense against host by cleaving histatin-5 (Hst 5), a peptide from human saliva that carries out fungicidal activity. The cleavage rate decreases in an order of SAP2 &gt; SAP9 &gt; SAP3 &gt; SAP7 &gt; SAP4 &gt; SAP1 &gt; SAP8. The first cleavage occurs between residues 'Lys-17' and 'His-18' of Hst 5, giving DSHAKRHHGYKRKFHEK and HHSHRGY peptides. Simultaneously, the DSHAKRHHGYKRK peptide is also formed. Further fragmentation by SAP9 results in FHEK product. The chain is Secreted aspartic protease 9 from Candida albicans (Yeast).